Consider the following 207-residue polypeptide: Large ribosomal subunit protein uL4 (207 aa).

A disordered region spans residues 44 to 78 (MRQGTHKTKNRAEVSGGGRKPWRQKGTGRARQGSI).

It belongs to the universal ribosomal protein uL4 family. Part of the 50S ribosomal subunit.

In terms of biological role, one of the primary rRNA binding proteins, this protein initially binds near the 5'-end of the 23S rRNA. It is important during the early stages of 50S assembly. It makes multiple contacts with different domains of the 23S rRNA in the assembled 50S subunit and ribosome. Forms part of the polypeptide exit tunnel. In Geobacillus kaustophilus (strain HTA426), this protein is Large ribosomal subunit protein uL4.